A 361-amino-acid polypeptide reads, in one-letter code: NAD(P)H-quinone oxidoreductase subunit 1, chloroplastic (361 aa).

7 helical membrane passes run 28 to 48, 99 to 119, 128 to 148, 249 to 269, 270 to 290, 301 to 321, and 341 to 361; these read IWVLIPILTLVLGITLGVLVI, FTIGPSIAVISILLSYSVIPF, LSIGVFLWIAVSSLAPIGLLM, YSGIKFGLFYVASYLNLLVSS, LFVTVLYLGGWNLSIPYLFVP, TIICIFITLAKTYLFLFISIA, and FLLPISLGNLLLTTSFQLLSL.

This sequence belongs to the complex I subunit 1 family. NDH is composed of at least 16 different subunits, 5 of which are encoded in the nucleus.

It localises to the plastid. It is found in the chloroplast thylakoid membrane. It catalyses the reaction a plastoquinone + NADH + (n+1) H(+)(in) = a plastoquinol + NAD(+) + n H(+)(out). The enzyme catalyses a plastoquinone + NADPH + (n+1) H(+)(in) = a plastoquinol + NADP(+) + n H(+)(out). Its function is as follows. NDH shuttles electrons from NAD(P)H:plastoquinone, via FMN and iron-sulfur (Fe-S) centers, to quinones in the photosynthetic chain and possibly in a chloroplast respiratory chain. The immediate electron acceptor for the enzyme in this species is believed to be plastoquinone. Couples the redox reaction to proton translocation, and thus conserves the redox energy in a proton gradient. This chain is NAD(P)H-quinone oxidoreductase subunit 1, chloroplastic, found in Jasminum nudiflorum (Winter jasmine).